A 415-amino-acid chain; its full sequence is MNSFSSNEYSTEISTEALNNWQQLVEQRISLELEYAAKLAKLTKSIKAIKQCAPLNDLTKQVCVELMQCNKKHLEASRYFQTHVKEFMKEYVDRENKFSNETISKSSAAALMTSMENFILFTNPVYHNKLQVPSKSDMEIANSLKITQPAEKNSGTANPISAYSLEHAELDERNNQLSEALSMLRLSPFVNNYYPSYQNRKDGKSLMENRGVVLSVDTVTSPISQSPKKLTPTTSPINSTSLSFVDAKKPGSKWPSQYDFPKKTKSTEIPFKTLPSLNINNERELTKHKLPIVKPKLAVFPSNQATASTLQLAPPPVQAIPTLRNPVNLDDKKESLLKYYATHPTITPDGFPIFAYVRALYAYKATLPSEIDLNVDDTLVVLNRQKDGWWKGLVVSPTVGRIGLFPSNYIEELEY.

S221 and S226 each carry phosphoserine. T231 is modified (phosphothreonine). At S235 the chain carries Phosphoserine. Residues 352 to 415 (PIFAYVRALY…PSNYIEELEY (64 aa)) enclose the SH3 domain.

Interacts with ubp4.

It localises to the cytoplasm. The protein localises to the endosome. Functionally, required for the regulation of activity and recruitment of ubp4 to endosomes. The chain is Ubp4-interactor sfp47 (sfp47) from Schizosaccharomyces pombe (strain 972 / ATCC 24843) (Fission yeast).